The chain runs to 61 residues: Large ribosomal subunit protein uL29 (61 aa).

It belongs to the universal ribosomal protein uL29 family.

The sequence is that of Large ribosomal subunit protein uL29 from Campylobacter lari (strain RM2100 / D67 / ATCC BAA-1060).